We begin with the raw amino-acid sequence, 372 residues long: Bifunctional coenzyme PQQ synthesis protein C/D (372 aa).

Residues 1–267 form a pqqC region; sequence MTAQFPPPVP…VAETNSAEDS (267 aa). Residues 260–288 are disordered; sequence ETNSAEDSPAAAASPAATTAEPTAFSGSD. The segment covering 264–283 has biased composition (low complexity); it reads AEDSPAAAASPAATTAEPTA. A linker region spans residues 268-280; that stretch reads PAAAASPAATTAE. The interval 281–372 is pqqD; that stretch reads PTAFSGSDVP…GLAQKRVLER (92 aa).

This sequence in the N-terminal section; belongs to the PqqC family. It in the C-terminal section; belongs to the PqqD family. As to quaternary structure, monomer. Interacts with PqqE.

The enzyme catalyses 6-(2-amino-2-carboxyethyl)-7,8-dioxo-1,2,3,4,7,8-hexahydroquinoline-2,4-dicarboxylate + 3 O2 = pyrroloquinoline quinone + 2 H2O2 + 2 H2O + H(+). The protein operates within cofactor biosynthesis; pyrroloquinoline quinone biosynthesis. The PqqC region is involved in ring cyclization and eight-electron oxidation of 3a-(2-amino-2-carboxyethyl)-4,5-dioxo-4,5,6,7,8,9-hexahydroquinoline-7,9-dicarboxylic-acid to PQQ. Functionally, the PqqD region functions as a PqqA binding domain and presents PqqA to PqqE. This chain is Bifunctional coenzyme PQQ synthesis protein C/D (pqqCD), found in Methylorubrum extorquens (strain ATCC 14718 / DSM 1338 / JCM 2805 / NCIMB 9133 / AM1) (Methylobacterium extorquens).